A 321-amino-acid chain; its full sequence is Cathepsin O (321 aa).

Positions 1 to 23 (MDVRALPWLPWLLWLLCRGGGDA) are cleaved as a signal peptide. The propeptide at 24 to 107 (DSRAPFTPTW…EVHMSIPNVS (84 aa)) is activation peptide. N62 and N105 each carry an N-linked (GlcNAc...) asparagine glycan. Disulfide bonds link C129–C170, C163–C204, and C262–C310. C132 is a catalytic residue. Residues H269 and N289 contribute to the active site.

Belongs to the peptidase C1 family. In terms of tissue distribution, expressed in all tissues examined. High levels seen in the ovary, kidney and placenta while low levels seen in thymus and skeletal muscle.

The protein localises to the lysosome. The catalysed reaction is The recombinant human enzyme hydrolyzes synthetic endopeptidase substrates including Z-Phe-Arg-NHMec and Z-Arg-Arg-NHMec.. Proteolytic enzyme possibly involved in normal cellular protein degradation and turnover. This Homo sapiens (Human) protein is Cathepsin O (CTSO).